We begin with the raw amino-acid sequence, 227 residues long: Ubiquitin-conjugating enzyme E2 6 (227 aa).

Residues 1–206 (MASKGAYKRL…NSKQSWVKSR (206 aa)) are Cytoplasmic-facing. The UBC core domain occupies 5–163 (GAYKRLMKEY…FPELIDKNRE (159 aa)). The active-site Glycyl thioester intermediate is the C87. A helical membrane pass occupies residues 207-225 (WSIAVLVFFALALARFFGA).

This sequence belongs to the ubiquitin-conjugating enzyme family.

The protein resides in the endoplasmic reticulum membrane. It carries out the reaction S-ubiquitinyl-[E1 ubiquitin-activating enzyme]-L-cysteine + [E2 ubiquitin-conjugating enzyme]-L-cysteine = [E1 ubiquitin-activating enzyme]-L-cysteine + S-ubiquitinyl-[E2 ubiquitin-conjugating enzyme]-L-cysteine.. The protein operates within protein modification; protein ubiquitination. Catalyzes the covalent attachment of ubiquitin to other proteins. Functions in degradation of misfolded or regulated proteins localized in the endoplasmic reticulum (ER) lumen or membrane via the ubiquitin-proteasome system. Cognate E2 conjugating enzyme for the doa10 ubiquitin ligase complex, which is part of the ERAD-C pathway responsible for the rapid degradation of membrane proteins with misfolded cytoplasmic domains. The chain is Ubiquitin-conjugating enzyme E2 6 (ubc6) from Schizosaccharomyces pombe (strain 972 / ATCC 24843) (Fission yeast).